The primary structure comprises 599 residues: Adenine deaminase (599 aa).

Belongs to the metallo-dependent hydrolases superfamily. Adenine deaminase family. Mn(2+) is required as a cofactor.

The catalysed reaction is adenine + H2O + H(+) = hypoxanthine + NH4(+). The chain is Adenine deaminase from Clostridium botulinum (strain Langeland / NCTC 10281 / Type F).